A 190-amino-acid chain; its full sequence is Elongation factor P 2 (190 aa).

This sequence belongs to the elongation factor P family.

It localises to the cytoplasm. It participates in protein biosynthesis; polypeptide chain elongation. Functionally, involved in peptide bond synthesis. Stimulates efficient translation and peptide-bond synthesis on native or reconstituted 70S ribosomes in vitro. Probably functions indirectly by altering the affinity of the ribosome for aminoacyl-tRNA, thus increasing their reactivity as acceptors for peptidyl transferase. The sequence is that of Elongation factor P 2 (efp2) from Chlamydia muridarum (strain MoPn / Nigg).